The sequence spans 347 residues: Epimerase family protein SDR39U1 homolog, chloroplastic (347 aa).

The transit peptide at 1-37 (MELLCSPTSLSSSFALSSALLVPRSFSMPGTRRFMVL) directs the protein to the chloroplast. NADP(+) is bound by residues 54 to 57 (TGFI), 76 to 77 (TR), 115 to 119 (LAGLP), and R136.

Can form homodimers. In terms of tissue distribution, expressed in leaves, stems and flower buds.

It localises to the plastid. The protein resides in the chloroplast inner membrane. Its subcellular location is the chloroplast. Its function is as follows. Putative NADP-dependent oxidoreductase that acts as a positive regulator of chloroplast division. May play a role at an early stage of the division process. The chain is Epimerase family protein SDR39U1 homolog, chloroplastic from Arabidopsis thaliana (Mouse-ear cress).